The sequence spans 377 residues: MRRLLTPWRGVAAGFLLNGILLGTWASRVPAVMGHFHVAKASFGVLLLLLGLGALISFPITGRLSDSLGAVRVARMIAIPFLVSIAALGLAPTIPLLAIALFLFGMCHGSMDVAVNSWASEVEKHMGRPVMSSFHAMWSVGAVLGAAGGYIATVFQTPVYVHFLVTAVTIGGLLGPFLLLDWQSTIRTHESGAVGLVLPNSGLFLVGLIALASGLGEGTALDWSAVYLHDVVGTEESDAALGYMGFSAAMVMMRLKADSLVTRWGSATVARISGFSAVFGILLIVLGETLPLVVAGFVLMGVGYAAVLPLAFSRAAADLVVPAGKAIASVAIFAYGAMTLGPFAIGLLAEAATMRLCFFIVGLFAALVAVLAPVLKQ.

The next 10 membrane-spanning stretches (helical) occupy residues 4 to 24, 41 to 61, 85 to 105, 134 to 154, 159 to 179, 192 to 212, 278 to 298, 301 to 321, 327 to 347, and 356 to 376; these read LLTPWRGVAAGFLLNGILLGT, ASFGVLLLLLGLGALISFPIT, IAALGLAPTIPLLAIALFLFG, FHAMWSVGAVLGAAGGYIATV, VYVHFLVTAVTIGGLLGPFLL, GAVGLVLPNSGLFLVGLIALA, VFGILLIVLGETLPLVVAGFV, GVGYAAVLPLAFSRAAADLVV, IASVAIFAYGAMTLGPFAIGL, and LCFFIVGLFAALVAVLAPVLK.

This sequence to R.meliloti MosC.

It is found in the cell membrane. Could be involved in a transport system. This is an uncharacterized protein from Sinorhizobium fredii (strain NBRC 101917 / NGR234).